The chain runs to 375 residues: Succinyl-diaminopimelate desuccinylase (375 aa).

Position 66 (His66) interacts with Zn(2+). The active site involves Asp68. Asp99 provides a ligand contact to Zn(2+). Catalysis depends on Glu133, which acts as the Proton acceptor. Residues Glu134, Glu162, and His348 each contribute to the Zn(2+) site.

It belongs to the peptidase M20A family. DapE subfamily. In terms of assembly, homodimer. Zn(2+) is required as a cofactor. Co(2+) serves as cofactor.

It carries out the reaction N-succinyl-(2S,6S)-2,6-diaminopimelate + H2O = (2S,6S)-2,6-diaminopimelate + succinate. It participates in amino-acid biosynthesis; L-lysine biosynthesis via DAP pathway; LL-2,6-diaminopimelate from (S)-tetrahydrodipicolinate (succinylase route): step 3/3. Its function is as follows. Catalyzes the hydrolysis of N-succinyl-L,L-diaminopimelic acid (SDAP), forming succinate and LL-2,6-diaminopimelate (DAP), an intermediate involved in the bacterial biosynthesis of lysine and meso-diaminopimelic acid, an essential component of bacterial cell walls. This Photorhabdus laumondii subsp. laumondii (strain DSM 15139 / CIP 105565 / TT01) (Photorhabdus luminescens subsp. laumondii) protein is Succinyl-diaminopimelate desuccinylase.